Consider the following 402-residue polypeptide: Myb-related protein 1 (402 aa).

The HTH myb-type domain occupies threonine 42–asparagine 102. Positions proline 73 to arginine 98 form a DNA-binding region, H-T-H motif. A coiled-coil region spans residues serine 148–glutamine 168. The LHEQLE motif lies at leucine 161–glutamate 166. Residues glutamine 238–threonine 260 are compositionally biased toward polar residues. Disordered regions lie at residues glutamine 238–methionine 266, glutamate 344–asparagine 363, and histidine 382–asparagine 402.

It belongs to the MYB-CC family. As to quaternary structure, isoforms 1 and 2: homodimer. Isoform 3: loss of dimerization. Expressed in phloem and/or cambium.

Its subcellular location is the nucleus. Functionally, transcription factor that may act on the GAL1 promoter. Acts redundantly with MYR2 as a repressor of flowering and organ elongation under decreased light intensity. Represses gibberellic acid (GA)-dependent responses and affects levels of bioactive GA. The chain is Myb-related protein 1 from Arabidopsis thaliana (Mouse-ear cress).